A 738-amino-acid polypeptide reads, in one-letter code: DNA ligase (738 aa).

NAD(+) is bound by residues 48 to 52 (DVVYD), 97 to 98 (SL), and Glu-136. Lys-138 acts as the N6-AMP-lysine intermediate in catalysis. Arg-159, Glu-196, Lys-356, and Lys-380 together coordinate NAD(+). Residues Cys-474, Cys-477, Cys-492, and Cys-497 each contribute to the Zn(2+) site. A BRCT domain is found at 659–738 (QLPQPLAGKT…SQLLELLEET (80 aa)).

The protein belongs to the NAD-dependent DNA ligase family. LigA subfamily. It depends on Mg(2+) as a cofactor. Mn(2+) serves as cofactor.

It carries out the reaction NAD(+) + (deoxyribonucleotide)n-3'-hydroxyl + 5'-phospho-(deoxyribonucleotide)m = (deoxyribonucleotide)n+m + AMP + beta-nicotinamide D-nucleotide.. DNA ligase that catalyzes the formation of phosphodiester linkages between 5'-phosphoryl and 3'-hydroxyl groups in double-stranded DNA using NAD as a coenzyme and as the energy source for the reaction. It is essential for DNA replication and repair of damaged DNA. The sequence is that of DNA ligase from Cyanothece sp. (strain PCC 7425 / ATCC 29141).